A 706-amino-acid polypeptide reads, in one-letter code: Termination factor NPH-I homolog (706 aa).

The region spanning 62–227 (IGQGENTRGL…VPCFNMLSGR (166 aa)) is the Helicase ATP-binding domain. ATP is bound at residue 75–82 (HQMGMGKT). Residues 168–171 (DEAH) carry the DEAH box motif. A Helicase C-terminal domain is found at 417–599 (QCLQPLKVLE…HLNSAFRDLL (183 aa)).

It belongs to the DEAD box helicase family. DEAH subfamily. Part of the viral DNA-directed RNA polymerase that consists of 8 polII-like subunits (RPB1, RPB2, RPB3, RPB5, RPB6, RPB7, RPB9, RPB10), a capping enzyme and a termination factor.

The protein localises to the virion. Functionally, putative DNA-dependent ATPase required for providing the needed energy to achieve the termination of early transcripts. This African swine fever virus (isolate Tick/South Africa/Pretoriuskop Pr4/1996) (ASFV) protein is Termination factor NPH-I homolog.